The sequence spans 1093 residues: Leukemia inhibitory factor receptor (1093 aa).

The signal sequence occupies residues 1 to 43; it reads MGAFSWWRQPSWMADNKRGRMTPSLPWLLSALTLLHLMMHVNG. The Extracellular portion of the chain corresponds to 44–829; it reads LKRGVQQDLK…SMFVVTKENS (786 aa). The Fibronectin type-III 1 domain occupies 45–127; it reads KRGVQQDLKC…QSKFTLNEKD (83 aa). Disulfide bonds link C54–C64 and C81–C89. N165, N200, N239, and N262 each carry an N-linked (GlcNAc...) asparagine glycan. Intrachain disulfides connect C209–C266 and C337–C347. 5 consecutive Fibronectin type-III domains span residues 331-428, 431-530, 534-625, 623-715, and 720-829; these read VPQK…ERVA, VPIS…TEAT, GPDT…IPND, PNDD…IGYI, and PIVA…KENS. N386, N403, N422, N441, N454, and N477 each carry an N-linked (GlcNAc...) asparagine glycan. C462 and C507 are joined by a disulfide. Positions 515-519 match the WSXWS motif motif; it reads WSKWS. Residues N568, N648, N659, N676, N725, and N783 are each glycosylated (N-linked (GlcNAc...) asparagine). A helical membrane pass occupies residues 830 to 850; sequence VGLIIAILIPVAVAVIVGVVT. At 851-1093 the chain is on the cytoplasmic side; the sequence is SILCYRKREW…TNFFQNKPND (243 aa). The Box 1 motif motif lies at 865–873; that stretch reads FYPDIPNPE. Disordered stretches follow at residues 908–941 and 1003–1093; these read ESRSIPPKIEDTEITSPVSERPGESSETDPENQA and LPIN…KPND. Phosphoserine occurs at positions 923 and 1040. 2 stretches are compositionally biased toward polar residues: residues 1028–1063 and 1082–1093; these read ANVNTWNLVSPDSPRSTDSNSEVVSFGSPCSINSRQ and SFTNFFQNKPND.

It belongs to the type I cytokine receptor family. Type 2 subfamily. As to quaternary structure, heterodimer composed of LIFR and IL6ST. The heterodimer formed by LIFR and IL6ST interacts with the complex formed by CNTF and CNTFR.

It is found in the cell membrane. In terms of biological role, signal-transducing molecule. May have a common pathway with IL6ST. The soluble form inhibits the biological activity of LIF by blocking its binding to receptors on target cells. In Rattus norvegicus (Rat), this protein is Leukemia inhibitory factor receptor (Lifr).